We begin with the raw amino-acid sequence, 147 residues long: Myoglobin (147 aa).

The Globin domain occupies 2–141 (ADFDMVLKCW…IIADMEADYK (140 aa)). Nitrite is bound at residue H60. H60 provides a ligand contact to O2. A heme b-binding site is contributed by H89.

It belongs to the globin family. Monomeric.

The protein resides in the cytoplasm. The protein localises to the sarcoplasm. The catalysed reaction is Fe(III)-heme b-[protein] + nitric oxide + H2O = Fe(II)-heme b-[protein] + nitrite + 2 H(+). It catalyses the reaction H2O2 + AH2 = A + 2 H2O. Its function is as follows. Monomeric heme protein which primary function is to store oxygen and facilitate its diffusion within muscle tissues. Reversibly binds oxygen through a pentacoordinated heme iron and enables its timely and efficient release as needed during periods of heightened demand. Depending on the oxidative conditions of tissues and cells, and in addition to its ability to bind oxygen, it also has a nitrite reductase activity whereby it regulates the production of bioactive nitric oxide. Under stress conditions, like hypoxia and anoxia, it also protects cells against reactive oxygen species thanks to its pseudoperoxidase activity. The protein is Myoglobin (mb) of Gobionotothen gibberifrons (Humped rockcod).